We begin with the raw amino-acid sequence, 85 residues long: Beta-insect depressant toxin Lqh-dprIT3h (85 aa).

The N-terminal stretch at 1–21 (MKLLLLLTISASMLIEGLVNA) is a signal peptide. Residues 22-82 (DGYIRGGDGC…EWDYETDTCG (61 aa)) form the LCN-type CS-alpha/beta domain. Intrachain disulfides connect Cys-31–Cys-81, Cys-35–Cys-56, Cys-42–Cys-63, and Cys-46–Cys-65. Position 82 is a glycine amide (Gly-82).

It belongs to the long (4 C-C) scorpion toxin superfamily. Sodium channel inhibitor family. Beta subfamily. Expressed by the venom gland.

The protein resides in the secreted. Functionally, depressant insect beta-toxins cause a transient contraction paralysis followed by a slow flaccid paralysis. They bind voltage-independently at site-4 of sodium channels (Nav) and block action potentials, primarily by depolarizing the axonal membrane and suppressing the sodium current. This depressant toxin is active only on insects. It is found in a relatively small amount in the venom. This is Beta-insect depressant toxin Lqh-dprIT3h from Leiurus hebraeus (Hebrew deathstalker scorpion).